The sequence spans 324 residues: tRNA dimethylallyltransferase (324 aa).

17–24 (GPTASGKT) lines the ATP pocket. 19–24 (TASGKT) contacts substrate. 4 interaction with substrate tRNA regions span residues 42 to 45 (DSAL), 166 to 170 (QRIQR), 251 to 256 (RCVGYR), and 284 to 291 (KRQITWLR).

This sequence belongs to the IPP transferase family. As to quaternary structure, monomer. It depends on Mg(2+) as a cofactor.

It carries out the reaction adenosine(37) in tRNA + dimethylallyl diphosphate = N(6)-dimethylallyladenosine(37) in tRNA + diphosphate. In terms of biological role, catalyzes the transfer of a dimethylallyl group onto the adenine at position 37 in tRNAs that read codons beginning with uridine, leading to the formation of N6-(dimethylallyl)adenosine (i(6)A). The polypeptide is tRNA dimethylallyltransferase (Burkholderia vietnamiensis (strain G4 / LMG 22486) (Burkholderia cepacia (strain R1808))).